A 302-amino-acid chain; its full sequence is Heat stress transcription factor B-1 (302 aa).

The span at 1–15 (MAAAEAAAAVGKQQQ) shows a compositional bias: low complexity. 2 disordered regions span residues 1-33 (MAAA…PFLT) and 116-184 (GIRR…RKDN). Residues 16–28 (KGGGGRGGGGGGP) are compositionally biased toward gly residues. Polar residues predominate over residues 123–133 (TTPQSSKSCGS). The span at 139-150 (FPPPLPPLPPEP) shows a compositional bias: pro residues. A compositionally biased stretch (low complexity) spans 151–172 (SATTSSGNDRSSSSASSPPRAD). Positions 170–202 (RADITSENEQLRKDNQTLTMELARARRHCEELL) form a coiled coil. The interval 180-209 (LRKDNQTLTMELARARRHCEELLGFLSRFL) is hydrophobic repeat HR-A/B. A Nuclear export signal motif is present at residues 211-218 (VRQLDLRL). The short motif at 263-267 (RKRAR) is the Nuclear localization signal element.

Belongs to the HSF family. Class B subfamily. Homotrimer. Post-translationally, exhibits temperature-dependent phosphorylation.

It localises to the cytoplasm. The protein localises to the nucleus. In terms of biological role, transcriptional regulator that specifically binds DNA of heat shock promoter elements (HSE). The chain is Heat stress transcription factor B-1 (HSFB1) from Oryza sativa subsp. japonica (Rice).